A 129-amino-acid chain; its full sequence is Glycine cleavage system H protein (129 aa).

Residues 24-106 (SYTVGISEHA…FGDGWFFRVM (83 aa)) form the Lipoyl-binding domain. Position 65 is an N6-lipoyllysine (K65).

It belongs to the GcvH family. The glycine cleavage system is composed of four proteins: P, T, L and H. (R)-lipoate is required as a cofactor.

In terms of biological role, the glycine cleavage system catalyzes the degradation of glycine. The H protein shuttles the methylamine group of glycine from the P protein to the T protein. The polypeptide is Glycine cleavage system H protein (Shewanella sediminis (strain HAW-EB3)).